A 378-amino-acid chain; its full sequence is MTKVVVGLSGGVDSAVAAFLLKKQGYLVEAVFMRNWDSNLNFDIQGNPTLNDICSQELDYKDSLKVSEQLGIKLHRVDFIEEYWQKVFMSFIKAFENNLTPNPDILCNNEIKFRAFIEYATTKLAPQYIAMGHYANIIYETSSDQKLVPRLACAVDQNKDQTYFLSQLTTKQLQNILFPLGNLTKQEVRQIALENNLINATKKDSTGICFIGERNFFQFLSNYLPAQKGDIKTLDGTFLAHHKGVMYYTIGQRKNLGLGDVPSQKPWFVVGKHLPTNTLYVEQGSTHPYLYSDKALIGDIVWRGKKTNLHLQAKMRYRQPNQDVILTWLDQNNLEIHYPQTIKAVTPGQICAFYDKNICCGAGVIKEVYFQGTKRLYT.

Residues 7-14 (GLSGGVDS) and methionine 33 contribute to the ATP site. The segment at 102–104 (NPD) is interaction with target base in tRNA. The active-site Nucleophile is cysteine 107. A disulfide bridge links cysteine 107 with cysteine 209. Residue glycine 132 coordinates ATP. The segment at 159–161 (KDQ) is interaction with tRNA. Cysteine 209 acts as the Cysteine persulfide intermediate in catalysis. An interaction with tRNA region spans residues 316 to 317 (RY).

Belongs to the MnmA/TRMU family.

Its subcellular location is the cytoplasm. The enzyme catalyses S-sulfanyl-L-cysteinyl-[protein] + uridine(34) in tRNA + AH2 + ATP = 2-thiouridine(34) in tRNA + L-cysteinyl-[protein] + A + AMP + diphosphate + H(+). Its function is as follows. Catalyzes the 2-thiolation of uridine at the wobble position (U34) of tRNA, leading to the formation of s(2)U34. This chain is tRNA-specific 2-thiouridylase MnmA, found in Onion yellows phytoplasma (strain OY-M).